A 262-amino-acid polypeptide reads, in one-letter code: Thiazole synthase (262 aa).

Catalysis depends on K97, which acts as the Schiff-base intermediate with DXP. Residues G158, 185 to 186 (AG), and 207 to 208 (NT) each bind 1-deoxy-D-xylulose 5-phosphate. Positions 243–262 (DKAQASTPTVGQPFWHSAEY) are disordered.

Belongs to the ThiG family. In terms of assembly, homotetramer. Forms heterodimers with either ThiH or ThiS.

It is found in the cytoplasm. The catalysed reaction is [ThiS sulfur-carrier protein]-C-terminal-Gly-aminoethanethioate + 2-iminoacetate + 1-deoxy-D-xylulose 5-phosphate = [ThiS sulfur-carrier protein]-C-terminal Gly-Gly + 2-[(2R,5Z)-2-carboxy-4-methylthiazol-5(2H)-ylidene]ethyl phosphate + 2 H2O + H(+). It functions in the pathway cofactor biosynthesis; thiamine diphosphate biosynthesis. In terms of biological role, catalyzes the rearrangement of 1-deoxy-D-xylulose 5-phosphate (DXP) to produce the thiazole phosphate moiety of thiamine. Sulfur is provided by the thiocarboxylate moiety of the carrier protein ThiS. In vitro, sulfur can be provided by H(2)S. The chain is Thiazole synthase from Neisseria meningitidis serogroup B (strain ATCC BAA-335 / MC58).